Consider the following 483-residue polypeptide: Membrane-bound lytic murein transglycosylase F (483 aa).

The first 18 residues, 1 to 18 (MKGLIARFIAGFALLLWA), serve as a signal peptide directing secretion. The interval 19–267 (WDMVFPWQQL…RIEEKYFNHL (249 aa)) is non-LT domain. An LT domain region spans residues 269-483 (HFDYVDIQSY…SKESDSTLKE (215 aa)). Glu312 is a catalytic residue. The interval 459–483 (QIQNNEEQSSVPQEISKESDSTLKE) is disordered. The segment covering 473-483 (ISKESDSTLKE) has biased composition (basic and acidic residues).

The protein in the N-terminal section; belongs to the bacterial solute-binding protein 3 family. It in the C-terminal section; belongs to the transglycosylase Slt family.

The protein localises to the cell outer membrane. The enzyme catalyses Exolytic cleavage of the (1-&gt;4)-beta-glycosidic linkage between N-acetylmuramic acid (MurNAc) and N-acetylglucosamine (GlcNAc) residues in peptidoglycan, from either the reducing or the non-reducing ends of the peptidoglycan chains, with concomitant formation of a 1,6-anhydrobond in the MurNAc residue.. Its function is as follows. Murein-degrading enzyme that degrades murein glycan strands and insoluble, high-molecular weight murein sacculi, with the concomitant formation of a 1,6-anhydromuramoyl product. Lytic transglycosylases (LTs) play an integral role in the metabolism of the peptidoglycan (PG) sacculus. Their lytic action creates space within the PG sacculus to allow for its expansion as well as for the insertion of various structures such as secretion systems and flagella. This is Membrane-bound lytic murein transglycosylase F from Actinobacillus pleuropneumoniae serotype 7 (strain AP76).